Consider the following 260-residue polypeptide: Indole-3-glycerol phosphate synthase (260 aa).

This sequence belongs to the TrpC family.

The catalysed reaction is 1-(2-carboxyphenylamino)-1-deoxy-D-ribulose 5-phosphate + H(+) = (1S,2R)-1-C-(indol-3-yl)glycerol 3-phosphate + CO2 + H2O. It functions in the pathway amino-acid biosynthesis; L-tryptophan biosynthesis; L-tryptophan from chorismate: step 4/5. The polypeptide is Indole-3-glycerol phosphate synthase (Neisseria gonorrhoeae (strain NCCP11945)).